We begin with the raw amino-acid sequence, 608 residues long: Zinc metalloproteinase-disintegrin-like agkihagin (608 aa).

A signal peptide spans 1-20; that stretch reads MIQVLLVTICLAAFPYQGSS. A propeptide spanning residues 21 to 189 is cleaved from the precursor; sequence IILESGNVND…KKASQSNLTP (169 aa). Residues 199-395 form the Peptidase M12B domain; sequence KFVKLFLVAD…NMPQCILKKP (197 aa). Cystine bridges form between cysteine 310/cysteine 390, cysteine 350/cysteine 374, and cysteine 352/cysteine 357. Histidine 335 contributes to the Zn(2+) binding site. Glutamate 336 is an active-site residue. Residues histidine 339 and histidine 345 each contribute to the Zn(2+) site. The Disintegrin domain maps to 403–488; sequence PPVCGNYFVE…ADCTDRFQKN (86 aa). The Ca(2+) site is built by valine 405, asparagine 408, phenylalanine 410, glutamate 412, glutamate 415, and aspartate 418. Cystine bridges form between cysteine 406/cysteine 435, cysteine 417/cysteine 430, cysteine 419/cysteine 425, cysteine 429/cysteine 452, cysteine 443/cysteine 449, cysteine 448/cysteine 474, cysteine 461/cysteine 481, cysteine 468/cysteine 499, cysteine 492/cysteine 504, cysteine 511/cysteine 561, cysteine 526/cysteine 570, cysteine 539/cysteine 549, cysteine 556/cysteine 596, and cysteine 590/cysteine 601. The D/ECD-tripeptide signature appears at 467-469; sequence ECD. Residues aspartate 469, methionine 470, aspartate 472, aspartate 483, and arginine 484 each contribute to the Ca(2+) site. A glycan (N-linked (GlcNAc...) asparagine) is linked at asparagine 501.

Belongs to the venom metalloproteinase (M12B) family. P-III subfamily. P-IIIc sub-subfamily. As to quaternary structure, homodimer; disulfide-linked. It depends on Zn(2+) as a cofactor. As to expression, expressed by the venom gland.

Its subcellular location is the secreted. Its activity is regulated as follows. Inhibited by EDTA and EGTA. Not inhibited by PMSF, antipain, pepstatin, and iodoacetamide. Functionally, strongly inhibits the collagen-induced human platelet aggregation. Hydrolyzes the Aalpha-chain of fibrinogen (FGA), without cleavage of Bbeta- and gamma-chains. Induces apoptosis and strongly inhibits proliferation of endothelial cells as well as adhesion of the cells to extracellular matrix proteins. The sequence is that of Zinc metalloproteinase-disintegrin-like agkihagin from Deinagkistrodon acutus (Hundred-pace snake).